The sequence spans 217 residues: GTP cyclohydrolase-2 (217 aa).

50-54 is a binding site for GTP; that stretch reads RIHSE. Residues cysteine 55, cysteine 66, and cysteine 68 each contribute to the Zn(2+) site. Residues glutamine 71, 93-95, and threonine 115 each bind GTP; that span reads EGR. The Proton acceptor role is filled by aspartate 127. The active-site Nucleophile is the arginine 129. The GTP site is built by threonine 150 and lysine 155.

Belongs to the GTP cyclohydrolase II family. Requires Zn(2+) as cofactor.

It carries out the reaction GTP + 4 H2O = 2,5-diamino-6-hydroxy-4-(5-phosphoribosylamino)-pyrimidine + formate + 2 phosphate + 3 H(+). Its pathway is cofactor biosynthesis; riboflavin biosynthesis; 5-amino-6-(D-ribitylamino)uracil from GTP: step 1/4. Functionally, catalyzes the conversion of GTP to 2,5-diamino-6-ribosylamino-4(3H)-pyrimidinone 5'-phosphate (DARP), formate and pyrophosphate. This Actinobacillus succinogenes (strain ATCC 55618 / DSM 22257 / CCUG 43843 / 130Z) protein is GTP cyclohydrolase-2.